The sequence spans 141 residues: Large ribosomal subunit protein uL11 (141 aa).

It belongs to the universal ribosomal protein uL11 family. Part of the ribosomal stalk of the 50S ribosomal subunit. Interacts with L10 and the large rRNA to form the base of the stalk. L10 forms an elongated spine to which L12 dimers bind in a sequential fashion forming a multimeric L10(L12)X complex. Post-translationally, one or more lysine residues are methylated.

Its function is as follows. Forms part of the ribosomal stalk which helps the ribosome interact with GTP-bound translation factors. This is Large ribosomal subunit protein uL11 from Synechococcus sp. (strain CC9311).